Consider the following 312-residue polypeptide: Ribonuclease Z (312 aa).

Positions 62, 64, 66, 67, 144, 215, and 273 each coordinate Zn(2+). The active-site Proton acceptor is D66.

The protein belongs to the RNase Z family. As to quaternary structure, homodimer. It depends on Zn(2+) as a cofactor.

It carries out the reaction Endonucleolytic cleavage of RNA, removing extra 3' nucleotides from tRNA precursor, generating 3' termini of tRNAs. A 3'-hydroxy group is left at the tRNA terminus and a 5'-phosphoryl group is left at the trailer molecule.. Its function is as follows. Zinc phosphodiesterase, which displays some tRNA 3'-processing endonuclease activity. Probably involved in tRNA maturation, by removing a 3'-trailer from precursor tRNA. This is Ribonuclease Z from Prochlorococcus marinus (strain AS9601).